Consider the following 534-residue polypeptide: Serine/threonine-protein kinase NLK (534 aa).

Sufficient for interaction with DAPK3 stretches follow at residues 8–132 (LVSC…KAHH) and 131–423 (HHHQ…SKRI). Required for interaction with TAB2 regions lie at residues 8–311 (LVSC…VVTQ) and 441–534 (YHTC…LVWE). Disordered regions lie at residues 29 to 79 (AAAA…SSAA) and 97 to 147 (QQPY…DIEP). Over residues 33–61 (GHHHHHHHHLPHLPPPHLHHHHHPQHHLH) the composition is skewed to basic residues. A compositionally biased stretch (low complexity) spans 110 to 126 (PGPAAAAPAQVQAAAAA). Positions 129–138 (KAHHHQHSHH) are enriched in basic residues. Residues 145–434 (IEPDRPIGYG…AKDALAHPYL (290 aa)) form the Protein kinase domain. Residues 151 to 159 (IGYGAFGVV) and Lys-174 contribute to the ATP site. Asp-271 acts as the Proton acceptor in catalysis. Phosphothreonine; by autocatalysis is present on Thr-305. Positions 305–307 (TQE) match the TQE motif. The segment at 435–534 (DEGRLRYHTC…EMPPSPLVWE (100 aa)) is required for homodimerization and kinase activation and localization to the nucleus. Ser-529 carries the phosphoserine modification.

The protein belongs to the protein kinase superfamily. CMGC Ser/Thr protein kinase family. MAP kinase subfamily. Homodimer. Homodimerization is required for intermolecular autophosphorylation, kinase activation and nuclear localization. May interact with components of cullin-RING-based SCF (SKP1-CUL1-F-box protein) E3 ubiquitin-protein ligase complexes. Interacts with LEF1, MEF2A, MYBL1 and MYBL2. Interacts with the upstream activating kinases HIPK2 and MAP3K7/TAK1. Interaction with MAP3K7/TAK1 seems to be indirect, and may be mediated by other proteins such as STAT3, TAB1 and TAB2. Interacts with and phosphorylates a number of transcription factors including FOXO1, FOXO3, FOXO4, MYB, NOTCH1 and TCF7L2/TCF4. Interacts with DAPK3/ZIPK, and this interaction may disrupt interaction with transcription factors such as TCF7L2/TCF4. Forms a transcriptional repressor complex with CHD7, PPARG and SETDB1. Interacts with RNF138/NARF. Interacts with ATF5; the interaction stabilizes ATF5 at the protein level in a kinase-independent manner. Requires Mg(2+) as cofactor. Post-translationally, phosphorylated on Thr-305. Intermolecular autophosphorylation on Thr-305 activates the enzyme.

It is found in the nucleus. It localises to the cytoplasm. The enzyme catalyses L-seryl-[protein] + ATP = O-phospho-L-seryl-[protein] + ADP + H(+). It carries out the reaction L-threonyl-[protein] + ATP = O-phospho-L-threonyl-[protein] + ADP + H(+). Its activity is regulated as follows. Activated by the non-canonical Wnt signaling pathway, in which WNT5A leads to activation of MAP3K7/TAK1 and HIPK2, which subsequently phosphorylates and activates this protein. Activated by dimerization and subsequent intermolecular autophosphorylation on Thr-305. Other cytokines such as IL6 may also activate this regulatory circuit. Serine/threonine-protein kinase that regulates a number of transcription factors with key roles in cell fate determination. Positive effector of the non-canonical Wnt signaling pathway, acting downstream of WNT5A, MAP3K7/TAK1 and HIPK2. Negative regulator of the canonical Wnt/beta-catenin signaling pathway. Binds to and phosphorylates TCF7L2/TCF4 and LEF1, promoting the dissociation of the TCF7L2/LEF1/beta-catenin complex from DNA, as well as the ubiquitination and subsequent proteolysis of LEF1. Together these effects inhibit the transcriptional activation of canonical Wnt/beta-catenin target genes. Negative regulator of the Notch signaling pathway. Binds to and phosphorylates NOTCH1, thereby preventing the formation of a transcriptionally active ternary complex of NOTCH1, RBPJ/RBPSUH and MAML1. Negative regulator of the MYB family of transcription factors. Phosphorylation of MYB leads to its subsequent proteolysis while phosphorylation of MYBL1 and MYBL2 inhibits their interaction with the coactivator CREBBP. Other transcription factors may also be inhibited by direct phosphorylation of CREBBP itself. Acts downstream of IL6 and MAP3K7/TAK1 to phosphorylate STAT3, which is in turn required for activation of NLK by MAP3K7/TAK1. Upon IL1B stimulus, cooperates with ATF5 to activate the transactivation activity of C/EBP subfamily members. Phosphorylates ATF5 but also stabilizes ATF5 protein levels in a kinase-independent manner. Acts as an inhibitor of the mTORC1 complex in response to osmotic stress by mediating phosphorylation of RPTOR, thereby preventing recruitment of the mTORC1 complex to lysosomes. This Bos taurus (Bovine) protein is Serine/threonine-protein kinase NLK (NLK).